A 217-amino-acid chain; its full sequence is tRNA (guanine-N(7)-)-methyltransferase (217 aa).

S-adenosyl-L-methionine contacts are provided by Glu43, Asp68, Asn101, and Asn123. Lys127 serves as a coordination point for substrate. The interaction with RNA stretch occupies residues 129-134 (KHNKRR). Substrate contacts are provided by residues Asp159 and 196 to 199 (TEYE).

This sequence belongs to the class I-like SAM-binding methyltransferase superfamily. TrmB family.

It catalyses the reaction guanosine(46) in tRNA + S-adenosyl-L-methionine = N(7)-methylguanosine(46) in tRNA + S-adenosyl-L-homocysteine. The protein operates within tRNA modification; N(7)-methylguanine-tRNA biosynthesis. Functionally, catalyzes the formation of N(7)-methylguanine at position 46 (m7G46) in tRNA. The polypeptide is tRNA (guanine-N(7)-)-methyltransferase (Clostridium botulinum (strain Okra / Type B1)).